Reading from the N-terminus, the 265-residue chain is Indole-3-glycerol phosphate synthase (265 aa).

The protein belongs to the TrpC family.

It catalyses the reaction 1-(2-carboxyphenylamino)-1-deoxy-D-ribulose 5-phosphate + H(+) = (1S,2R)-1-C-(indol-3-yl)glycerol 3-phosphate + CO2 + H2O. Its pathway is amino-acid biosynthesis; L-tryptophan biosynthesis; L-tryptophan from chorismate: step 4/5. The sequence is that of Indole-3-glycerol phosphate synthase from Syntrophobacter fumaroxidans (strain DSM 10017 / MPOB).